The sequence spans 458 residues: Bifunctional protein GlmU (458 aa).

The interval 1 to 228 is pyrophosphorylase; sequence MHPKLDILIL…DWEVLGVNSK (228 aa). UDP-N-acetyl-alpha-D-glucosamine-binding positions include 10–13, K24, Q75, 80–81, 102–104, G139, E153, N168, and N226; these read LAAG, GT, and YGD. D104 lines the Mg(2+) pocket. A Mg(2+)-binding site is contributed by N226. Residues 229–249 are linker; that stretch reads AQLAELERIHQNEVAQRLLAD. Residues 250–458 are N-acetyltransferase; that stretch reads GVTLMDPARL…KRPIKPKKEG (209 aa). The UDP-N-acetyl-alpha-D-glucosamine site is built by R332 and K350. Catalysis depends on H362, which acts as the Proton acceptor. UDP-N-acetyl-alpha-D-glucosamine contacts are provided by Y365 and N376. Acetyl-CoA-binding positions include A379, 385-386, S404, A422, and R439; that span reads NY.

This sequence in the N-terminal section; belongs to the N-acetylglucosamine-1-phosphate uridyltransferase family. The protein in the C-terminal section; belongs to the transferase hexapeptide repeat family. Homotrimer. The cofactor is Mg(2+).

It localises to the cytoplasm. It catalyses the reaction alpha-D-glucosamine 1-phosphate + acetyl-CoA = N-acetyl-alpha-D-glucosamine 1-phosphate + CoA + H(+). It carries out the reaction N-acetyl-alpha-D-glucosamine 1-phosphate + UTP + H(+) = UDP-N-acetyl-alpha-D-glucosamine + diphosphate. It participates in nucleotide-sugar biosynthesis; UDP-N-acetyl-alpha-D-glucosamine biosynthesis; N-acetyl-alpha-D-glucosamine 1-phosphate from alpha-D-glucosamine 6-phosphate (route II): step 2/2. Its pathway is nucleotide-sugar biosynthesis; UDP-N-acetyl-alpha-D-glucosamine biosynthesis; UDP-N-acetyl-alpha-D-glucosamine from N-acetyl-alpha-D-glucosamine 1-phosphate: step 1/1. It functions in the pathway bacterial outer membrane biogenesis; LPS lipid A biosynthesis. Catalyzes the last two sequential reactions in the de novo biosynthetic pathway for UDP-N-acetylglucosamine (UDP-GlcNAc). The C-terminal domain catalyzes the transfer of acetyl group from acetyl coenzyme A to glucosamine-1-phosphate (GlcN-1-P) to produce N-acetylglucosamine-1-phosphate (GlcNAc-1-P), which is converted into UDP-GlcNAc by the transfer of uridine 5-monophosphate (from uridine 5-triphosphate), a reaction catalyzed by the N-terminal domain. The sequence is that of Bifunctional protein GlmU from Thiobacillus denitrificans (strain ATCC 25259 / T1).